Here is a 154-residue protein sequence, read N- to C-terminus: SsrA-binding protein (154 aa).

The interval 134 to 154 is disordered; that stretch reads ETLRRRDAKREVERALKEKNR.

The protein belongs to the SmpB family.

It is found in the cytoplasm. Its function is as follows. Required for rescue of stalled ribosomes mediated by trans-translation. Binds to transfer-messenger RNA (tmRNA), required for stable association of tmRNA with ribosomes. tmRNA and SmpB together mimic tRNA shape, replacing the anticodon stem-loop with SmpB. tmRNA is encoded by the ssrA gene; the 2 termini fold to resemble tRNA(Ala) and it encodes a 'tag peptide', a short internal open reading frame. During trans-translation Ala-aminoacylated tmRNA acts like a tRNA, entering the A-site of stalled ribosomes, displacing the stalled mRNA. The ribosome then switches to translate the ORF on the tmRNA; the nascent peptide is terminated with the 'tag peptide' encoded by the tmRNA and targeted for degradation. The ribosome is freed to recommence translation, which seems to be the essential function of trans-translation. In Halalkalibacterium halodurans (strain ATCC BAA-125 / DSM 18197 / FERM 7344 / JCM 9153 / C-125) (Bacillus halodurans), this protein is SsrA-binding protein.